The primary structure comprises 185 residues: Ribosome-recycling factor (185 aa).

It belongs to the RRF family.

It is found in the cytoplasm. Its function is as follows. Responsible for the release of ribosomes from messenger RNA at the termination of protein biosynthesis. May increase the efficiency of translation by recycling ribosomes from one round of translation to another. This Thermotoga sp. (strain RQ2) protein is Ribosome-recycling factor.